The chain runs to 208 residues: MSILQKLVLASGSPRRIELLQQAGIEPDRILPADIDETPLRAEHPRSLAKRLSTEKAEKAFASLKTETGYAPSFVLAADTVVAVGRRILPKAETLDDAANCLGLLSGRSHRVYSGICLITPGGKLRQRLVETRVRFKRLPREEIEAYVASGEWRGKAGGYAVQGLAGSFVVKLVGSYTNIVGLPLYETVALLSGEGFKIHQSWLTARP.

The active-site Proton acceptor is the aspartate 79.

This sequence belongs to the Maf family. YhdE subfamily. A divalent metal cation is required as a cofactor.

The protein resides in the cytoplasm. It catalyses the reaction dTTP + H2O = dTMP + diphosphate + H(+). The catalysed reaction is UTP + H2O = UMP + diphosphate + H(+). Functionally, nucleoside triphosphate pyrophosphatase that hydrolyzes dTTP and UTP. May have a dual role in cell division arrest and in preventing the incorporation of modified nucleotides into cellular nucleic acids. This is dTTP/UTP pyrophosphatase from Mesorhizobium japonicum (strain LMG 29417 / CECT 9101 / MAFF 303099) (Mesorhizobium loti (strain MAFF 303099)).